The sequence spans 802 residues: Leucine--tRNA ligase (802 aa).

The 'HIGH' region motif lies at 40 to 51; it reads PYPSGAGLHVGH. The short motif at 576-580 is the 'KMSKS' region element; sequence KMSKS. K579 provides a ligand contact to ATP.

Belongs to the class-I aminoacyl-tRNA synthetase family.

The protein localises to the cytoplasm. It carries out the reaction tRNA(Leu) + L-leucine + ATP = L-leucyl-tRNA(Leu) + AMP + diphosphate. In Bacillus cereus (strain ATCC 14579 / DSM 31 / CCUG 7414 / JCM 2152 / NBRC 15305 / NCIMB 9373 / NCTC 2599 / NRRL B-3711), this protein is Leucine--tRNA ligase.